Consider the following 112-residue polypeptide: UPF0102 protein Spea_0251 (112 aa).

It belongs to the UPF0102 family.

In Shewanella pealeana (strain ATCC 700345 / ANG-SQ1), this protein is UPF0102 protein Spea_0251.